Here is a 360-residue protein sequence, read N- to C-terminus: Photosystem II protein D1 3 (360 aa).

Transmembrane regions (helical) follow at residues 29-46 (YVGWFGVLMIPTLLAATI), 118-133 (HFLIGVFCYMGREWEL), and 142-156 (WICVAYSAPVAAATA). H118 provides a ligand contact to chlorophyll a. Pheophytin a is bound at residue Y126. Positions 170 and 189 each coordinate [CaMn4O5] cluster. The chain crosses the membrane as a helical span at residues 197 to 218 (FHQLGVAGVFGGALFSAMHGSL). A chlorophyll a-binding site is contributed by H198. A quinone-binding positions include H215 and 264-265 (SF). H215 is a Fe cation binding site. Position 272 (H272) interacts with Fe cation. Residues 274–288 (FLAAWPVIGIWFTAL) traverse the membrane as a helical segment. H332, E333, D342, and A344 together coordinate [CaMn4O5] cluster. Positions 345 to 360 (SAESAPVAMIAPSING) are excised as a propeptide.

It belongs to the reaction center PufL/M/PsbA/D family. In terms of assembly, PSII is composed of 1 copy each of membrane proteins PsbA, PsbB, PsbC, PsbD, PsbE, PsbF, PsbH, PsbI, PsbJ, PsbK, PsbL, PsbM, PsbT, PsbX, PsbY, PsbZ, Psb30/Ycf12, peripheral proteins PsbO, CyanoQ (PsbQ), PsbU, PsbV and a large number of cofactors. It forms dimeric complexes. Precursor protein interacts with Ycf48. Requires The D1/D2 heterodimer binds P680, chlorophylls that are the primary electron donor of PSII, and subsequent electron acceptors. It shares a non-heme iron and each subunit binds pheophytin, quinone, additional chlorophylls, carotenoids and lipids. D1 provides most of the ligands for the Mn4-Ca-O5 cluster of the oxygen-evolving complex (OEC). There is also a Cl(-1) ion associated with D1 and D2, which is required for oxygen evolution. The PSII complex binds additional chlorophylls, carotenoids and specific lipids. as cofactor. C-terminally processed by CtpA; processing is essential to allow assembly of the oxygen-evolving complex and thus photosynthetic growth. Post-translationally, tyr-161 forms a radical intermediate that is referred to as redox-active TyrZ, YZ or Y-Z.

The protein localises to the cellular thylakoid membrane. The enzyme catalyses 2 a plastoquinone + 4 hnu + 2 H2O = 2 a plastoquinol + O2. Functionally, photosystem II (PSII) is a light-driven water:plastoquinone oxidoreductase that uses light energy to abstract electrons from H(2)O, generating O(2) and a proton gradient subsequently used for ATP formation. It consists of a core antenna complex that captures photons, and an electron transfer chain that converts photonic excitation into a charge separation. The D1/D2 (PsbA/PsbD) reaction center heterodimer binds P680, the primary electron donor of PSII as well as several subsequent electron acceptors. The chain is Photosystem II protein D1 3 from Thermosynechococcus vestitus (strain NIES-2133 / IAM M-273 / BP-1).